The primary structure comprises 3033 residues: Genome polyprotein (3033 aa).

At serine 2 the chain carries N-acetylserine; by host. The interaction with STAT1 stretch occupies residues 2 to 23; that stretch reads STNPKPQRKTKRNTNRRPQDVK. The interval 2–58 is interaction with EIF2AK2/PKR; the sequence is STNPKPQRKTKRNTNRRPQDVKFPGGGQIVGGVYLLPRRGPRLGVRATRKTSERSQP. An interaction with DDX3X region spans residues 2–59; that stretch reads STNPKPQRKTKRNTNRRPQDVKFPGGGQIVGGVYLLPRRGPRLGVRATRKTSERSQPR. The segment at 2 to 75 is disordered; it reads STNPKPQRKT…PKDRRSAGKS (74 aa). Residues 2–168 are Cytoplasmic-facing; it reads STNPKPQRKT…EDGINYATGN (167 aa). Short sequence motifs (nuclear localization signal) lie at residues 5–13 and 38–43; these read PKPQRKTKR and PRRGPR. Over residues 7–16 the composition is skewed to basic residues; sequence PQRKTKRNTN. The span at 32–47 shows a compositional bias: low complexity; the sequence is GGVYLLPRRGPRLGVR. A Phosphoserine; by host modification is found at serine 53. 2 consecutive short sequence motifs (nuclear localization signal) follow at residues 58–64 and 66–71; these read PRGRRQP and PKDRRS. A phosphoserine; by host mark is found at serine 99 and serine 116. Residues 112 to 152 form an important for endoplasmic reticulum and mitochondrial localization region; that stretch reads PRHRSRNLGKVIDTLTCGFADLMGYIPVVGAPVGGVARALA. The interaction with APOA2 stretch occupies residues 122–173; sequence VIDTLTCGFADLMGYIPVVGAPVGGVARALAHGVRVLEDGINYATGNLPGCS. Residues 164–167 are important for lipid droplets localization; it reads YATG. A helical transmembrane segment spans residues 169-189; it reads LPGCSFSIFLLALLSCMSVPV. Residues 178 to 191 constitute a propeptide, ER anchor for the core protein, removed in mature form by host signal peptidase; it reads LLALLSCMSVPVSA. The Lumenal segment spans residues 190-358; it reads SAVEVKNTSQ…TGAHWGVMFG (169 aa). Asparagine 196, asparagine 209, and asparagine 234 each carry an N-linked (GlcNAc...) asparagine; by host glycan. Residues 265–296 form an important for fusion region; the sequence is IVVSATFCSALYIGDVCGAIMIAAQATIISPQ. N-linked (GlcNAc...) asparagine; by host glycosylation is present at asparagine 305. Residues 359 to 379 traverse the membrane as a helical segment; the sequence is LAYFSMQGAWAKVVVILLLTA. Residues 380–729 are Lumenal-facing; sequence GVDAQTHTIS…WEWVVLLFLL (350 aa). The interval 385 to 412 is HVR1; that stretch reads THTISGHAARTTHGLVSLFTPGSQQNIQ. Asparagine 417, asparagine 423, and asparagine 430 each carry an N-linked (GlcNAc...) (high mannose) asparagine; by host glycan. 4 disulfides stabilise this stretch: cysteine 429–cysteine 554, cysteine 452–cysteine 459, cysteine 488–cysteine 496, and cysteine 505–cysteine 510. Asparagine 448 carries N-linked (GlcNAc...) asparagine; by host glycosylation. Residues 475-480 form an HVR2 region; that stretch reads EENVTN. N-linked (GlcNAc...) asparagine; by host glycosylation is present at asparagine 477. The segment at 482–495 is CD81-binding 1; that stretch reads DNMRPYCWHYPPRP. N-linked (GlcNAc...) asparagine; by host glycosylation is present at asparagine 534. The segment at 546–553 is CD81-binding 2; that stretch reads PPRGAWFG. Residue asparagine 558 is glycosylated (N-linked (GlcNAc...) asparagine; by host). 4 disulfide bridges follow: cysteine 566–cysteine 571, cysteine 585–cysteine 589, cysteine 601–cysteine 624, and cysteine 611–cysteine 648. 2 N-linked (GlcNAc...) (high mannose) asparagine; by host glycosylation sites follow: asparagine 627 and asparagine 649. A disulfide bridge connects residues cysteine 656 and cysteine 681. The tract at residues 664 to 675 is PKR/eIF2-alpha phosphorylation homology domain (PePHD); the sequence is SQLSPLLHSTTE. The chain crosses the membrane as a helical span at residues 730–750; it reads LADARVCACLWMLLLLGQAEA. Over 751–761 the chain is Lumenal; sequence ALEKLVILHAA. Residues 762-782 traverse the membrane as a helical segment; the sequence is SAASSHGMLCFIIFFIAAWYI. The Cytoplasmic portion of the chain corresponds to 783-786; that stretch reads KGRV. The chain crosses the membrane as a helical span at residues 787–807; sequence TPLVTYSYLGMWSFSLLLLAL. The Lumenal segment spans residues 808–817; it reads PQQAYALDTT. Residues 818 to 838 form a helical membrane-spanning segment; the sequence is EQGQIGLVLLVVISVFTLSPA. The Cytoplasmic segment spans residues 839 to 885; sequence YKILLCRSLWWLSYLLVRAEALIQDWVPPWQARGGRDGIIWAATIFC. A helical transmembrane segment spans residues 886 to 906; that stretch reads PGVLFDITNWLLAILGPGYLL. The 128-residue stretch at 903-1030 folds into the Peptidase C18 domain; the sequence is GYLLRSVLTS…EYTSKGWKLL (128 aa). Over 907 to 932 the chain is Lumenal; the sequence is RSVLTSTPYFVRAQALLRICAAVRHL. Residues 908-1210 are protease NS2-3; it reads SVLTSTPYFV…PIESLDVIIR (303 aa). Cysteine 926 carries the S-palmitoyl cysteine; by host lipid modification. The chain crosses the membrane as a helical span at residues 933-953; sequence SGGKYVQMMLLTLGKWTGTYI. The segment at 933–953 is interaction with host SCPS1; it reads SGGKYVQMMLLTLGKWTGTYI. At 954–1661 the chain is on the cytoplasmic side; sequence YDHLSPMSGW…CMQADLEIMT (708 aa). Active-site for protease NS2 activity; shared with dimeric partner residues include histidine 956, glutamate 976, and cysteine 997. In terms of domain architecture, Peptidase S29 spans 1031 to 1212; sequence APITAYAQQT…ESLDVIIRSP (182 aa). Residues histidine 1087 and aspartate 1111 each act as charge relay system; for serine protease NS3 activity in the active site. The Zn(2+) site is built by cysteine 1127 and cysteine 1129. Serine 1169 serves as the catalytic Charge relay system; for serine protease NS3 activity. 2 residues coordinate Zn(2+): cysteine 1175 and histidine 1179. Residues 1221–1373 form the Helicase ATP-binding domain; it reads PAVPQTYQVG…PNIEEVALGH (153 aa). 1234–1241 lines the ATP pocket; that stretch reads APTGSGKS. Mg(2+) contacts are provided by serine 1241 and glutamate 1321. The short motif at 1320–1323 is the DECH box element; sequence DECH. An RNA-binding region spans residues 1490–1502; that stretch reads QRRGRTGRGRLGI. A helical transmembrane segment spans residues 1662–1682; that stretch reads STWVLAGGVLAAIAAYCLATG. Positions 1683-1694 are NS3-binding; the sequence is CVVCIGRVNINQ. Topologically, residues 1683-1809 are cytoplasmic; that stretch reads CVVCIGRVNI…ALTSPLPTST (127 aa). The helical transmembrane segment at 1810–1830 threads the bilayer; it reads TILLNIMGGWLASQIAPAAGA. Topologically, residues 1831–1832 are lumenal; sequence TG. A helical membrane pass occupies residues 1833 to 1853; that stretch reads FVVSGLVGAAVGSIGLGKILV. A topological domain (cytoplasmic) is located at residue aspartate 1854. Residues 1855–1875 form a helical membrane-spanning segment; sequence VLAGYGAGISGALVAFKIMSG. The Lumenal portion of the chain corresponds to 1876–1885; it reads EKPSVEDVVN. Residues 1886–1906 form a helical membrane-spanning segment; it reads LLPGILSPGALVVGVICAAIL. The Cytoplasmic portion of the chain corresponds to 1907-1976; it reads RRHVGQGEGA…WITEDCPVPC (70 aa). Residue cysteine 1976 is the site of S-palmitoyl cysteine; by host attachment. An intramembrane segment occupies 1977–2007; sequence AGSWLRDIWDWACTILTDFKNWLSTKLLPKM. Over 2008-3012 the chain is Cytoplasmic; that stretch reads PGLPFISCQR…YHSVSRARPR (1005 aa). Zn(2+) is bound by residues cysteine 2015, cysteine 2033, cysteine 2035, and cysteine 2056. The interval 2124 to 2212 is FKBP8-binding; sequence EFFSWVDGVQ…ASSSASQLSA (89 aa). Positions 2124-2332 are transcriptional activation; it reads EFFSWVDGVQ…PTPPPRRRRA (209 aa). The interaction with non-structural protein 4A stretch occupies residues 2139 to 2143; it reads PTPKP. Positions 2193–2212 are disordered; that stretch reads RLARGSPPSEASSSASQLSA. The interval 2193 to 2460 is interaction with host SKP2; sequence RLARGSPPSE…ALITPCGPEE (268 aa). A phosphoserine; by host mark is found at serine 2198, serine 2201, serine 2205, serine 2208, serine 2211, and serine 2214. Residues 2198 to 2212 are compositionally biased toward low complexity; the sequence is SPPSEASSSASQLSA. Residues 2214-2249 form an ISDR region; sequence SLRATCTAHAKNYAVEMVDANFFMGSDVTRIESETK. The segment at 2214 to 2275 is interaction with EIF2AK2/PKR; that stretch reads SLRATCTAHA…REPSVPSEYL (62 aa). Positions 2249–2306 are NS4B-binding; the sequence is KVLILDSLDPSVEEEDEREPSVPSEYLLPKKKFPQALPVWARPDYNPPVVETWKRPDY. The tract at residues 2299-2376 is V3; sequence ETWKRPDYDP…MDTTDATDQP (78 aa). The segment at 2308–2328 is disordered; it reads PPTVSGCALPPRVTAPTPPPR. Residues 2322-2325 carry the SH3-binding motif; that stretch reads APTP. The short motif at 2327–2335 is the Nuclear localization signal element; the sequence is PRRRRALVL. Lysine 2350 participates in a covalent cross-link: Glycyl lysine isopeptide (Lys-Gly) (interchain with G-Cter in ubiquitin). The tract at residues 2353–2431 is disordered; that stretch reads GQLPPSCDSG…PDLDSGSWST (79 aa). The span at 2361–2373 shows a compositional bias: polar residues; the sequence is SGRSTGMDTTDAT. Phosphoserine; by host is present on residues serine 2471 and serine 2484. Positions 2656-2774 constitute a RdRp catalytic domain; sequence PMGFSYDTRC…ISESQGAEED (119 aa). Aspartate 2662, aspartate 2760, and aspartate 2761 together coordinate Mg(2+). A helical membrane pass occupies residues 3013 to 3033; that stretch reads FLLLCLLLLSVGVGIFLLPAR.

The protein belongs to the hepacivirus polyprotein family. Homooligomer. Interacts with E1 (via C-terminus). Interacts with the non-structural protein 5A. Interacts (via N-terminus) with host STAT1 (via SH2 domain); this interaction results in decreased STAT1 phosphorylation and ubiquitin-mediated proteasome-dependent STAT1 degradation, leading to decreased IFN-stimulated gene transcription. Interacts with host STAT3; this interaction constitutively activates STAT3. Interacts with host LTBR receptor. Interacts with host TNFRSF1A receptor and possibly induces apoptosis. Interacts with host HNRPK. Interacts with host YWHAE. Interacts with host UBE3A/E6AP. Interacts with host DDX3X. Interacts with host APOA2. Interacts with host RXRA protein. Interacts with host SP110 isoform 3/Sp110b; this interaction sequesters the transcriptional corepressor SP110 away from the nucleus. Interacts with host CREB3 nuclear transcription protein; this interaction triggers cell transformation. Interacts with host ACY3. Interacts with host C1QR1. Interacts with host RBM24; this interaction, which enhances the interaction of the mature core protein with 5'-UTR, may inhibit viral translation and favor replication. Interacts with host EIF2AK2/PKR; this interaction induces the autophosphorylation of EIF2AK2. Part of the viral assembly initiation complex composed of NS2, E1, E2, NS3, NS4A, NS5A and the mature core protein. In terms of assembly, forms a heterodimer with envelope glycoprotein E2. Interacts with mature core protein. Interacts with protease NS2. The heterodimer E1/E2 interacts with host CLDN1; this interaction plays a role in viral entry into host cell. Interacts with host SPSB2 (via C-terminus). Part of the viral assembly initiation complex composed of NS2, E1, E2, NS3, NS4A, NS5A and the mature core protein. Interacts with host NEURL3; this interaction prevents E1 binding to glycoprotein E2. As to quaternary structure, forms a heterodimer with envelope glycoprotein E1. Interacts with host CD81 and SCARB1 receptors; these interactions play a role in viral entry into host cell. Interacts with host EIF2AK2/PKR; this interaction inhibits EIF2AK2 and probably allows the virus to evade the innate immune response. Interacts with host CD209/DC-SIGN and CLEC4M/DC-SIGNR. Interact with host SPCS1; this interaction is essential for viral particle assembly. Interacts with protease NS2. The heterodimer E1/E2 interacts with host CLDN1; this interaction plays a role in viral entry into host cell. Part of the viral assembly initiation complex composed of NS2, E1, E2, NS3, NS4A, NS5A and the mature core protein. Interacts with host SLC3A2/4F2hc; the interaction may facilitate viral entry into host cell. Interacts with human PLSCR1. Homohexamer. Homoheptamer. Interacts with protease NS2. In terms of assembly, homodimer. Interacts with host SPCS1; this interaction is essential for viral particle assembly. Interacts with envelope glycoprotein E1. Interacts with envelope glycoprotein E2. Interacts with viroporin p7. Interacts with serine protease/helicase NS3. Part of the replication complex composed of NS2, NS3, NS4A, NS4B, NS5A and the RNA-directed RNA polymerase embedded in an ER-derived membranous web. Part of the viral assembly initiation complex composed of NS2, E1, E2, NS3, NS4A, NS5A and the mature core protein. As to quaternary structure, interacts with protease NS2. Interacts with non-structural protein 4A; this interaction stabilizes the folding of NS3 serine protease. NS3-NS4A interaction is essential for NS3 activation and allows membrane anchorage of the latter. NS3/NS4A complex also prevents phosphorylation of host IRF3, thus preventing the establishment of dsRNA induced antiviral state. Interacts with host MAVS; this interaction leads to the cleavage and inhibition of host MAVS. Interacts with host TICAM1; this interaction leads to the cleavage and inhibition of host TICAM1. Interacts with host TANK-binding kinase/TBK1; this interaction results in the inhibition of the association between TBK1 and IRF3, which leads to the inhibition of IRF3 activation. Interacts with host RBM24. Part of the replication complex composed of NS2, NS3, NS4A, NS4B, NS5A and the RNA-directed RNA polymerase embedded in an ER-derived membranous web. Part of the viral assembly initiation complex composed of NS2, E1, E2, NS3, NS4A, NS5A and the mature core protein. Interacts with NS3 serine protease; this interaction stabilizes the folding of NS3 serine protease. NS3-NS4A interaction is essential for NS3 activation and allows membrane anchorage of the latter. Interacts with non-structural protein 5A (via N-terminus). Part of the replication complex composed of NS2, NS3, NS4A, NS4B, NS5A and the RNA-directed RNA polymerase embedded in an ER-derived membranous web. Part of the viral assembly initiation complex composed of NS2, E1, E2, NS3, NS4A, NS5A and the mature core protein. In terms of assembly, homomultimer. Interacts with non-structural protein NS5A. Interacts with host PLA2G4C; this interaction likely initiates the recruitment of replication complexes to lipid droplets. Interacts with host STING; this interaction disrupts the interaction between STING and TBK1 thereby suppressing the interferon signaling. Part of the replication complex composed of NS2, NS3, NS4A, NS4B, NS5A and the RNA-directed RNA polymerase embedded in an ER-derived membranous web. As to quaternary structure, monomer. Homodimer; dimerization is required for RNA-binding. Interacts with the mature core protein. Interacts (via N-terminus) with non-structural protein 4A. Interacts with non-structural protein 4B. Interacts (via region D2) with RNA-directed RNA polymerase. Part of the viral assembly initiation complex composed of NS2, E1, E2, NS3, NS4A, NS5A and the mature core protein. Part of the replication complex composed of NS2, NS3, NS4A, NS4B, NS5A and the RNA-directed RNA polymerase embedded in an ER-derived membranous web. Interacts with host GRB2. Interacts with host BIN1. Interacts with host PIK3R1. Interacts with host SRCAP. Interacts with host FKBP8. Interacts (via C-terminus) with host VAPB (via MSP domain). Interacts with host EIF2AK2/PKR; this interaction leads to disruption of EIF2AK2 dimerization by NS5A and probably allows the virus to evade the innate immune response. Interacts (via N-terminus) with host PACSIN2 (via N-terminus); this interaction attenuates protein kinase C alpha-mediated phosphorylation of PACSIN2 by disrupting the interaction between PACSIN2 and PRKCA. Interacts (via N-terminus) with host SRC kinase (via SH2 domain). Interacts with most Src-family kinases. Interacts with host IFI27 and SKP2; promotes the ubiquitin-mediated proteasomal degradation of NS5A. Interacts with host GPS2. Interacts with host TNFRSF21; this interaction allows the modulation by the virus of JNK, p38 MAPK, STAT3, and Akt signaling pathways in a DR6-dependent manner. Interacts (via N-terminus) with host CIDEB (via N-terminus); this interaction seems to regulate the association of HCV particles with APOE. Interacts with host CHKA/Choline Kinase-alpha; CHKA bridges host PI4KA and NS5A and potentiates NS5A-stimulated PI4KA activity, which then facilitates the targeting of the ternary complex to the ER for viral replication. Interacts with host SPSB2 (via C-terminus); this interaction targets NS5A for ubiquitination and degradation. Interacts with host RAB18; this interaction may promote the association of NS5A and other replicase components with lipid droplets. Interacts (via region D2) with host PPIA/CYPA; the interaction stimulates RNA-binding ability of NS5A and is dependent on the peptidyl-prolyl cis-trans isomerase activity of PPIA/CYPA. Interacts with host TRIM14; this interaction induces the degradation of NS5A. Homooligomer. Interacts with non-structural protein 5A. Interacts with host VAPB. Interacts with host PRK2/PKN2. Interacts with host HNRNPA1 and SEPT6; these interactions facilitate viral replication. Part of the replication complex composed of NS2, NS3, NS4A, NS4B, NS5A and the RNA-directed RNA polymerase. Zn(2+) is required as a cofactor. Requires Mg(2+) as cofactor. In terms of processing, specific enzymatic cleavages in vivo yield mature proteins. The structural proteins, core, E1, E2 and p7 are produced by proteolytic processing by host signal peptidases. The core protein precursor is synthesized as a 23 kDa, which is retained in the ER membrane through the hydrophobic signal peptide. Cleavage by the signal peptidase releases the 21 kDa mature core protein. The cleavage of the core protein precursor occurs between aminoacids 176 and 188 but the exact cleavage site is not known. Some degraded forms of the core protein appear as well during the course of infection. The other proteins (p7, NS2, NS3, NS4A, NS4B, NS5A and NS5B) are cleaved by the viral proteases. Autoprocessing between NS2 and NS3 is mediated by the NS2 cysteine protease catalytic domain and regulated by the NS3 N-terminal domain. Post-translationally, phosphorylated by host PKC and PKA. Ubiquitinated; mediated by UBE3A and leading to core protein subsequent proteasomal degradation. In terms of processing, highly N-glycosylated. Post-translationally, palmitoylation is required for NS2/3 autoprocessing and E2 recruitment to membranes. Palmitoylated. This modification may play a role in its polymerization or in protein-protein interactions. In terms of processing, phosphorylated on serines in a basal form termed p56. p58 is a hyperphosphorylated form of p56. p56 and p58 coexist in the cell in roughly equivalent amounts. Hyperphosphorylation is dependent on the presence of NS4A. Host CSNK1A1/CKI-alpha or RPS6KB1 kinases may be responsible for NS5A phosphorylation. Post-translationally, tyrosine phosphorylation is essential for the interaction with host SRC. Ubiquitinated. Ubiquitination, most probably at Lys-2350, mediated by host IFI27 and SKP2 leads to proteasomal degradation, restricting viral infection. Ubiquitination by host TRIM22 leads to interruption of viral replication. In terms of processing, the N-terminus is phosphorylated by host PRK2/PKN2.

It is found in the host endoplasmic reticulum membrane. Its subcellular location is the host mitochondrion membrane. The protein resides in the virion. It localises to the host cytoplasm. The protein localises to the host nucleus. It is found in the host lipid droplet. Its subcellular location is the virion membrane. The protein resides in the host mitochondrion. It localises to the host cell membrane. The protein localises to the host perinuclear region. It catalyses the reaction Hydrolysis of four peptide bonds in the viral precursor polyprotein, commonly with Asp or Glu in the P6 position, Cys or Thr in P1 and Ser or Ala in P1'.. The catalysed reaction is a ribonucleoside 5'-triphosphate + H2O = a ribonucleoside 5'-diphosphate + phosphate + H(+). The enzyme catalyses ATP + H2O = ADP + phosphate + H(+). It carries out the reaction RNA(n) + a ribonucleoside 5'-triphosphate = RNA(n+1) + diphosphate. Inhibited by the antiviral drug hexamethylene amiloride. Inhibition by amantadine appears to be genotype-dependent. Also inhibited by long-alkyl-chain iminosugar derivatives. Its activity is regulated as follows. Activity is up-regulated by PRK2/PKN2-mediated phosphorylation. Its function is as follows. Packages viral RNA to form a viral nucleocapsid, and promotes virion budding. Participates in the viral particle production as a result of its interaction with the non-structural protein 5A. Binds RNA and may function as a RNA chaperone to induce the RNA structural rearrangements taking place during virus replication. Modulates viral translation initiation by interacting with viral IRES and 40S ribosomal subunit. Affects various cell signaling pathways, host immunity and lipid metabolism. Prevents the establishment of cellular antiviral state by blocking the interferon-alpha/beta (IFN-alpha/beta) and IFN-gamma signaling pathways and by blocking the formation of phosphorylated STAT1 and promoting ubiquitin-mediated proteasome-dependent degradation of STAT1. Activates STAT3 leading to cellular transformation. Regulates the activity of cellular genes, including c-myc and c-fos. May repress the promoter of p53, and sequester CREB3 and SP110 isoform 3/Sp110b in the cytoplasm. Represses cell cycle negative regulating factor CDKN1A, thereby interrupting an important check point of normal cell cycle regulation. Targets transcription factors involved in the regulation of inflammatory responses and in the immune response: suppresses TNF-induced NF-kappa-B activation, and activates AP-1. Binds to dendritic cells (DCs) via C1QR1, resulting in down-regulation of T-lymphocytes proliferation. Alters lipid metabolism by interacting with hepatocellular proteins involved in lipid accumulation and storage. Induces up-regulation of FAS promoter activity, and thereby contributes to the increased triglyceride accumulation in hepatocytes (steatosis). Forms a heterodimer with envelope glycoprotein E2, which mediates virus attachment to the host cell, virion internalization through clathrin-dependent endocytosis and fusion with host membrane. Fusion with the host cell is most likely mediated by both E1 and E2, through conformational rearrangements of the heterodimer required for fusion rather than a classical class II fusion mechanism. E1/E2 heterodimer binds host apolipoproteins such as APOB and ApoE thereby forming a lipo-viro-particle (LVP). APOE associated to the LVP allows the initial virus attachment to cell surface receptors such as the heparan sulfate proteoglycans (HSPGs), syndecan-1 (SDC1), syndecan-1 (SDC2), the low-density lipoprotein receptor (LDLR) and scavenger receptor class B type I (SCARB1). The cholesterol transfer activity of SCARB1 allows E2 exposure and binding of E2 to SCARB1 and the tetraspanin CD81. E1/E2 heterodimer binding on CD81 activates the epithelial growth factor receptor (EGFR) signaling pathway. Diffusion of the complex E1-E2-EGFR-SCARB1-CD81 to the cell lateral membrane allows further interaction with Claudin 1 (CLDN1) and occludin (OCLN) to finally trigger HCV entry. Functionally, forms a heterodimer with envelope glycoprotein E1, which mediates virus attachment to the host cell, virion internalization through clathrin-dependent endocytosis and fusion with host membrane. Fusion with the host cell is most likely mediated by both E1 and E2, through conformational rearrangements of the heterodimer required for fusion rather than a classical class II fusion mechanism. The interaction between envelope glycoprotein E2 and host apolipoprotein E/APOE allows the proper assembly, maturation and infectivity of the viral particles. This interaction is probably promoted via the up-regulation of cellular autophagy by the virus. E1/E2 heterodimer binds host apolipoproteins such as APOB and APOE thereby forming a lipo-viro-particle (LVP). APOE associated to the LVP allows the initial virus attachment to cell surface receptors such as the heparan sulfate proteoglycans (HSPGs), syndecan-1 (SDC1), syndecan-1 (SDC2), the low-density lipoprotein receptor (LDLR) and scavenger receptor class B type I (SCARB1). The cholesterol transfer activity of SCARB1 allows E2 exposure and binding of E2 to SCARB1 and the tetraspanin CD81. E1/E2 heterodimer binding on CD81 activates the epithelial growth factor receptor (EGFR) signaling pathway. Diffusion of the complex E1-E2-EGFR-SCARB1-CD81 to the cell lateral membrane allows further interaction with Claudin 1 (CLDN1) and occludin (OCLN) to finally trigger HCV entry. Inhibits host EIF2AK2/PKR activation, preventing the establishment of an antiviral state. Viral ligand for CD209/DC-SIGN and CLEC4M/DC-SIGNR, which are respectively found on dendritic cells (DCs), and on liver sinusoidal endothelial cells and macrophage-like cells of lymph node sinuses. These interactions allow the capture of circulating HCV particles by these cells and subsequent facilitated transmission to permissive cells such as hepatocytes and lymphocyte subpopulations. The interaction between E2 and host amino acid transporter complex formed by SLC3A2 and SLC7A5/LAT1 may facilitate viral entry into host cell. In terms of biological role, ion channel protein that acts as a viroporin and plays an essential role in the assembly, envelopment and secretion of viral particles. Regulates the host cell secretory pathway, which induces the intracellular retention of viral glycoproteins and favors assembly of viral particles. Creates a pore in acidic organelles and releases Ca(2+) and H(+) in the cytoplasm of infected cells, leading to a productive viral infection. High levels of cytoplasmic Ca(2+) may trigger membrane trafficking and transport of viral ER-associated proteins to viroplasms, sites of viral genome replication. This ionic imbalance induces the assembly of the inflammasome complex, which triggers the maturation of pro-IL-1beta into IL-1beta through the action of caspase-1. Targets also host mitochondria and induces mitochondrial depolarization. In addition of its role as a viroporin, acts as a lipid raft adhesion factor. Its function is as follows. Cysteine protease required for the proteolytic auto-cleavage between the non-structural proteins NS2 and NS3. The N-terminus of NS3 is required for the function of NS2 protease (active region NS2-3). Promotes the initiation of viral particle assembly by mediating the interaction between structural and non-structural proteins. Displays three enzymatic activities: serine protease with a chymotrypsin-like fold, NTPase and RNA helicase. NS3 serine protease, in association with NS4A, is responsible for the cleavages of NS3-NS4A, NS4A-NS4B, NS4B-NS5A and NS5A-NS5B. The NS3/NS4A complex prevents phosphorylation of host IRF3, thus preventing the establishment of dsRNA induced antiviral state. The NS3/NS4A complex induces host amino acid transporter component SLC3A2, thus contributing to HCV propagation. NS3 RNA helicase binds to RNA and unwinds both dsDNA and dsRNA in the 3' to 5' direction, and likely resolves RNA complicated stable secondary structures in the template strand. Binds a single ATP and catalyzes the unzipping of a single base pair of dsRNA. Inhibits host antiviral proteins TBK1 and IRF3 thereby preventing the establishment of an antiviral state. Cleaves host MAVS/CARDIF thereby preventing the establishment of an antiviral state. Cleaves host TICAM1/TRIF, thereby disrupting TLR3 signaling and preventing the establishment of an antiviral state. Functionally, peptide cofactor which forms a non-covalent complex with the N-terminal of NS3 serine protease. The NS3/NS4A complex prevents phosphorylation of host IRF3, thus preventing the establishment of dsRNA induced antiviral state. The NS3/NS4A complex induces host amino acid transporter component SLC3A2, thus contributing to HCV propagation. In terms of biological role, induces a specific membrane alteration that serves as a scaffold for the virus replication complex. This membrane alteration gives rise to the so-called ER-derived membranous web that contains the replication complex. NS4B self-interaction contributes to its function in membranous web formation. Promotes host TRIF protein degradation in a CASP8-dependent manner thereby inhibiting host TLR3-mediated interferon signaling. Disrupts the interaction between STING and TBK1 contributing to the inhibition of interferon signaling. Its function is as follows. Phosphorylated protein that is indispensable for viral replication and assembly. Both hypo- and hyperphosphorylated states are required for the viral life cycle. The hyperphosphorylated form of NS5A is an inhibitor of viral replication. Involved in RNA-binding and especially in binding to the viral genome. Zinc is essential for RNA-binding. Participates in the viral particle production as a result of its interaction with the mature viral core protein. Its interaction with host VAPB may target the viral replication complex to vesicles. Down-regulates viral IRES translation initiation. Mediates interferon resistance, presumably by interacting with and inhibiting host EIF2AK2/PKR. Prevents BIN1-induced apoptosis. Acts as a transcriptional activator of some host genes important for viral replication when localized in the nucleus. Via the interaction with host PACSIN2, modulates lipid droplet formation in order to promote virion assembly. Modulates TNFRSF21/DR6 signaling pathway for viral propagation. RNA-dependent RNA polymerase that performs primer-template recognition and RNA synthesis during viral replication. Initiates RNA transcription/replication at a flavin adenine dinucleotide (FAD), resulting in a 5'- FAD cap on viral RNAs. In this way, recognition of viral 5' RNA by host pattern recognition receptors can be bypassed, thereby evading activation of antiviral pathways. The sequence is that of Genome polyprotein from Hepatitis C virus genotype 2k (isolate VAT96) (HCV).